A 591-amino-acid polypeptide reads, in one-letter code: L-fucose isomerase (591 aa).

Catalysis depends on proton acceptor residues glutamate 337 and aspartate 361. Positions 337, 361, and 528 each coordinate Mn(2+).

It belongs to the L-fucose isomerase family. As to quaternary structure, homohexamer. It depends on Mn(2+) as a cofactor.

It is found in the cytoplasm. The enzyme catalyses L-fucose = L-fuculose. It functions in the pathway carbohydrate degradation; L-fucose degradation; L-lactaldehyde and glycerone phosphate from L-fucose: step 1/3. Its function is as follows. Converts the aldose L-fucose into the corresponding ketose L-fuculose. This Escherichia coli (strain SMS-3-5 / SECEC) protein is L-fucose isomerase.